Reading from the N-terminus, the 273-residue chain is Putative ankyrin repeat protein RBE_0317 (273 aa).

ANK repeat units lie at residues 31-60 (LGKEIFPIATFFDKNDIIRTLMEEKIDFYS), 93-123 (NGNTLLHAAIDQGKSEVVKFLTSYKNLEVNT), 127-157 (GGNSPLHLAIKSNNPEIVEMLLSYENINVNE), 161-191 (YGDTTLHKAIRSYNHKIIEMLLLREEIDVNE), and 195-225 (QGETPLHGAVKSNRPEIVKMLLSHKNMDTKQ).

The protein is Putative ankyrin repeat protein RBE_0317 of Rickettsia bellii (strain RML369-C).